Consider the following 196-residue polypeptide: RNA-binding protein with multiple splicing (196 aa).

M1 is subject to N-acetylmethionine. T12 is subject to Phosphothreonine. One can recognise an RRM domain in the interval 24–101 (RTLFVSGLPL…QTLRLEFAKA (78 aa)). An interaction with RNA region spans residues 98–105 (FAKANTKM). Phosphothreonine is present on T113.

Homodimer; each protein chain binds one RNA molecule via the external surface of the homodimer. Interacts with RNA binding proteins MBNL1, RBFOX2, RBM4 and RBM14; the interaction allows cooperative assembly of stable cell-specific alternative splicing regulatory complexes. Interacts with SMAD2, SMAD3 and SMAD4; the interactions are direct. Ubiquitously expressed, at various levels depending on the isoform and the tissue. Strongly expressed in the heart, prostate, small intestine, large intestine, and ovary; moderately expressed in the placenta, lung, liver, kidney, pancreas, and testis; and poorly expressed in the skeletal muscle, spleen, thymus and peripheral leukocytes.

The protein resides in the nucleus. Its subcellular location is the cytoplasm. The protein localises to the stress granule. It localises to the P-body. Functionally, RNA binding protein that mediates the regulation of pre-mRNA alternative splicing (AS). Acts either as activator (FLNB, HSPG2, LIPA1, MYOCD, PTPRF and PPFIBP1) or repressor (TPM1, ACTN1, ITGA7, PIEZO1, LSM14B, MBNL1 and MBML2) of splicing events on specific pre-mRNA targets. Together with RNA binding proteins RBFOX2 and MBNL1/2, activates a splicing program associated with differentiated contractile vascular smooth muscle cells (SMC) by regulating AS of numerous pre-mRNA involved in actin cytoskeleton and focal adhesion machineries, suggesting a role in promoting a cell differentiated state. Binds to introns, exons and 3'-UTR associated with tandem CAC trinucleotide motifs separated by a variable spacer region, at a minimum as a dimer. The minimal length of RNA required for RBPMS-binding tandem CAC motifs is 15 nt, with spacing ranging from 1 to 9 nt. Can also bind to CA dinucleotide repeats. Mediates repression of TPM1 exon 3 by binding to CAC tandem repeats in the flanking intronic regions, followed by higher-order oligomerization and heterotypic interactions with other splicing regulators including MBNL1 and RBFOX2, which prevents assembly of ATP-dependent splicing complexes. In terms of biological role, acts as a regulator of pre-mRNA alternative splicing (AS). Binds mRNA. Regulates AS of ACTN1, FLNB, although with lower efficiency than isoform A / RBPMSA. Acts as coactivator of SMAD transcriptional activity in a TGFB1-dependent manner, possibly through increased phosphorylation of SMAD2 and SMAD3 at the C-terminal SSXS regions and promotion of the nuclear accumulation of SMAD proteins. The chain is RNA-binding protein with multiple splicing from Homo sapiens (Human).